A 143-amino-acid polypeptide reads, in one-letter code: Peptide methionine sulfoxide reductase MsrB (143 aa).

The MsrB domain occupies 16–139 (DAELRRRLTP…NSAALNFESR (124 aa)). Residues Cys55, Cys58, Cys104, and Cys107 each coordinate Zn(2+). The active-site Nucleophile is the Cys128.

Belongs to the MsrB Met sulfoxide reductase family. The cofactor is Zn(2+).

It catalyses the reaction L-methionyl-[protein] + [thioredoxin]-disulfide + H2O = L-methionyl-(R)-S-oxide-[protein] + [thioredoxin]-dithiol. The sequence is that of Peptide methionine sulfoxide reductase MsrB from Burkholderia vietnamiensis (strain G4 / LMG 22486) (Burkholderia cepacia (strain R1808)).